Consider the following 131-residue polypeptide: D-ribose pyranase (131 aa).

H20 acts as the Proton donor in catalysis. Residues D28, H98, and 120-122 each bind substrate; that span reads YSN.

Belongs to the RbsD / FucU family. RbsD subfamily. Homodecamer.

The protein localises to the cytoplasm. The enzyme catalyses beta-D-ribopyranose = beta-D-ribofuranose. The protein operates within carbohydrate metabolism; D-ribose degradation; D-ribose 5-phosphate from beta-D-ribopyranose: step 1/2. In terms of biological role, catalyzes the interconversion of beta-pyran and beta-furan forms of D-ribose. The sequence is that of D-ribose pyranase from Lactobacillus gasseri (strain ATCC 33323 / DSM 20243 / BCRC 14619 / CIP 102991 / JCM 1131 / KCTC 3163 / NCIMB 11718 / NCTC 13722 / AM63).